The primary structure comprises 39 residues: MAGGGRIPLWIVATVAGTGALVVVGLFFYGAYAGLGSSL.

Residues 7–27 traverse the membrane as a helical segment; sequence IPLWIVATVAGTGALVVVGLF.

It belongs to the PsbJ family. In terms of assembly, PSII is composed of 1 copy each of membrane proteins PsbA, PsbB, PsbC, PsbD, PsbE, PsbF, PsbH, PsbI, PsbJ, PsbK, PsbL, PsbM, PsbT, PsbX, PsbY, PsbZ, Psb30/Ycf12, peripheral proteins PsbO, CyanoQ (PsbQ), PsbU, PsbV and a large number of cofactors. It forms dimeric complexes.

It localises to the cellular thylakoid membrane. Functionally, one of the components of the core complex of photosystem II (PSII). PSII is a light-driven water:plastoquinone oxidoreductase that uses light energy to abstract electrons from H(2)O, generating O(2) and a proton gradient subsequently used for ATP formation. It consists of a core antenna complex that captures photons, and an electron transfer chain that converts photonic excitation into a charge separation. The chain is Photosystem II reaction center protein J from Synechococcus sp. (strain ATCC 27144 / PCC 6301 / SAUG 1402/1) (Anacystis nidulans).